The following is a 453-amino-acid chain: uncharacterized protein (453 aa).

The protein to B.subtilis YcdB.

This is an uncharacterized protein from Bacillus subtilis (strain 168).